The primary structure comprises 238 residues: Succinate dehydrogenase assembly factor 2, mitochondrial (238 aa).

The disordered stretch occupies residues 47 to 82; it reads GLKADGSRADQAEAGASQSLDKQSRTLDSVRDDTLS. A compositionally biased stretch (basic and acidic residues) spans 68–80; that stretch reads KQSRTLDSVRDDT.

It belongs to the SDHAF2 family. As to quaternary structure, interacts with the flavoprotein subunit within the SDH catalytic dimer.

It localises to the mitochondrion matrix. In terms of biological role, plays an essential role in the assembly of succinate dehydrogenase (SDH), an enzyme complex (also referred to as respiratory complex II) that is a component of both the tricarboxylic acid (TCA) cycle and the mitochondrial electron transport chain, and which couples the oxidation of succinate to fumarate with the reduction of ubiquinone (coenzyme Q) to ubiquinol. Required for flavinylation (covalent attachment of FAD) of the flavoprotein subunit of the SDH catalytic dimer. The chain is Succinate dehydrogenase assembly factor 2, mitochondrial from Mycosarcoma maydis (Corn smut fungus).